Consider the following 287-residue polypeptide: 4-hydroxybenzoate octaprenyltransferase (287 aa).

The next 6 helical transmembrane spans lie at 41–61, 89–109, 133–153, 158–178, 218–238, and 267–287; these read WPLI…GCAM, WEAV…ILPL, FFAI…PMAF, NTVP…SIAY, LGIY…WVGW, and NNWL…MAGS.

This sequence belongs to the UbiA prenyltransferase family. It depends on Mg(2+) as a cofactor.

It is found in the cell inner membrane. The enzyme catalyses all-trans-octaprenyl diphosphate + 4-hydroxybenzoate = 4-hydroxy-3-(all-trans-octaprenyl)benzoate + diphosphate. Its pathway is cofactor biosynthesis; ubiquinone biosynthesis. Functionally, catalyzes the prenylation of para-hydroxybenzoate (PHB) with an all-trans polyprenyl group. Mediates the second step in the final reaction sequence of ubiquinone-8 (UQ-8) biosynthesis, which is the condensation of the polyisoprenoid side chain with PHB, generating the first membrane-bound Q intermediate 3-octaprenyl-4-hydroxybenzoate. This Burkholderia multivorans (strain ATCC 17616 / 249) protein is 4-hydroxybenzoate octaprenyltransferase.